The chain runs to 183 residues: NADH-quinone oxidoreductase subunit B (183 aa).

Residues cysteine 60, cysteine 61, cysteine 125, and cysteine 154 each coordinate [4Fe-4S] cluster.

Belongs to the complex I 20 kDa subunit family. NDH-1 is composed of 14 different subunits. Subunits NuoB, C, D, E, F, and G constitute the peripheral sector of the complex. Requires [4Fe-4S] cluster as cofactor.

The protein localises to the cell inner membrane. It catalyses the reaction a quinone + NADH + 5 H(+)(in) = a quinol + NAD(+) + 4 H(+)(out). NDH-1 shuttles electrons from NADH, via FMN and iron-sulfur (Fe-S) centers, to quinones in the respiratory chain. The immediate electron acceptor for the enzyme in this species is believed to be ubiquinone. Couples the redox reaction to proton translocation (for every two electrons transferred, four hydrogen ions are translocated across the cytoplasmic membrane), and thus conserves the redox energy in a proton gradient. The chain is NADH-quinone oxidoreductase subunit B from Desulfovibrio desulfuricans (strain ATCC 27774 / DSM 6949 / MB).